Consider the following 525-residue polypeptide: MALDIHAHRILILDFGSQYTQLIARRVREIGVYCELHPFDMDDEAIREFNPRGIILAGGPESVHEANSPRAPQAVFDLKVPVLGICYGMQTMAEQMGGKVEGSDLREFGYARVDVVGKSRLLDGIEDHVDDDGVLGLDVWMSHGDKVTQMPGNFSVLASTPSCPIAGMYDDALGYYGVQFHPEVTHTKQGGRILSRFVQDICGCEALWTASNIVEDAIAQVRAQVGSANVLLGLSGGVDSSVVAALLHRAIGDQLTCVFVDNGLLRLHEGDQVMAMFKENMGVKVIRADAEKQFLDNLEGEADPEKKRKIIGRTFIDVFDAEASKLENIQFLAQGTIYPDVIESAGAKSGKAHVIKSHHNVGGLPEEMNLKLVEPLRELFKDEVRKIGLELGLPYDMVYRHPFPGPGLGVRILGEVKKEYADILRRADHIFIEELRKADWYHKTSQAFVVFQPVKSVGVVGDGRRYAWVVALRAVETVDFMTARWAHLPYELLETVSGRIINEIDGISRVTYDVSSKPPATIEWE.

In terms of domain architecture, Glutamine amidotransferase type-1 spans 9 to 207 (RILILDFGSQ…VQDICGCEAL (199 aa)). Cysteine 86 functions as the Nucleophile in the catalytic mechanism. Catalysis depends on residues histidine 181 and glutamate 183. The GMPS ATP-PPase domain occupies 208–400 (WTASNIVEDA…LGLPYDMVYR (193 aa)). ATP is bound at residue 235–241 (SGGVDSS).

As to quaternary structure, homodimer.

The enzyme catalyses XMP + L-glutamine + ATP + H2O = GMP + L-glutamate + AMP + diphosphate + 2 H(+). The protein operates within purine metabolism; GMP biosynthesis; GMP from XMP (L-Gln route): step 1/1. Its function is as follows. Catalyzes the synthesis of GMP from XMP. The protein is GMP synthase [glutamine-hydrolyzing] of Pseudomonas entomophila (strain L48).